A 307-amino-acid chain; its full sequence is Transcription initiation factor IIB (307 aa).

2 repeat units span residues 123 to 206 (NELE…LREL) and 217 to 298 (DYVT…ELTQ).

Belongs to the TFIIB family.

Stabilizes TBP binding to an archaeal box-A promoter. Also responsible for recruiting RNA polymerase II to the pre-initiation complex (DNA-TBP-TFIIB). This is Transcription initiation factor IIB from Sulfolobus acidocaldarius (strain ATCC 33909 / DSM 639 / JCM 8929 / NBRC 15157 / NCIMB 11770).